A 392-amino-acid polypeptide reads, in one-letter code: Homoserine O-acetyltransferase (392 aa).

In terms of domain architecture, AB hydrolase-1 spans 52–356 (NVVVVLHALT…ICGHDGFLVE (305 aa)). The active-site Nucleophile is the S157. A substrate-binding site is contributed by R227. Active-site residues include D320 and H350. Residue D351 participates in substrate binding. The tract at residues 373–392 (SQSAGPGGAGPGSRKGTTRR) is disordered.

It belongs to the AB hydrolase superfamily. MetX family. In terms of assembly, homodimer.

It localises to the cytoplasm. It carries out the reaction L-homoserine + acetyl-CoA = O-acetyl-L-homoserine + CoA. It functions in the pathway amino-acid biosynthesis; L-methionine biosynthesis via de novo pathway; O-acetyl-L-homoserine from L-homoserine: step 1/1. Transfers an acetyl group from acetyl-CoA to L-homoserine, forming acetyl-L-homoserine. This Mycolicibacterium paratuberculosis (strain ATCC BAA-968 / K-10) (Mycobacterium paratuberculosis) protein is Homoserine O-acetyltransferase.